A 134-amino-acid polypeptide reads, in one-letter code: 6,7-dimethyl-8-ribityllumazine synthase (134 aa).

Residues Phe-11, 43-45 (AYD), and 67-69 (AIV) each bind 5-amino-6-(D-ribitylamino)uracil. (2S)-2-hydroxy-3-oxobutyl phosphate is bound at residue 72–73 (DT). Catalysis depends on His-75, which acts as the Proton donor. 5-amino-6-(D-ribitylamino)uracil is bound at residue Phe-100. Arg-115 lines the (2S)-2-hydroxy-3-oxobutyl phosphate pocket.

The protein belongs to the DMRL synthase family.

It catalyses the reaction (2S)-2-hydroxy-3-oxobutyl phosphate + 5-amino-6-(D-ribitylamino)uracil = 6,7-dimethyl-8-(1-D-ribityl)lumazine + phosphate + 2 H2O + H(+). It functions in the pathway cofactor biosynthesis; riboflavin biosynthesis; riboflavin from 2-hydroxy-3-oxobutyl phosphate and 5-amino-6-(D-ribitylamino)uracil: step 1/2. Catalyzes the formation of 6,7-dimethyl-8-ribityllumazine by condensation of 5-amino-6-(D-ribitylamino)uracil with 3,4-dihydroxy-2-butanone 4-phosphate. This is the penultimate step in the biosynthesis of riboflavin. The sequence is that of 6,7-dimethyl-8-ribityllumazine synthase from Halorubrum lacusprofundi (strain ATCC 49239 / DSM 5036 / JCM 8891 / ACAM 34).